The following is a 258-amino-acid chain: Regulatory protein RecX (258 aa).

It belongs to the RecX family.

Its subcellular location is the cytoplasm. Its function is as follows. Modulates RecA activity. The polypeptide is Regulatory protein RecX (Streptococcus pyogenes serotype M3 (strain ATCC BAA-595 / MGAS315)).